Here is a 286-residue protein sequence, read N- to C-terminus: Phosphatidylserine decarboxylase proenzyme (286 aa).

Catalysis depends on charge relay system; for autoendoproteolytic cleavage activity residues Asp-90, His-147, and Ser-252. Ser-252 serves as the catalytic Schiff-base intermediate with substrate; via pyruvic acid; for decarboxylase activity. A Pyruvic acid (Ser); by autocatalysis modification is found at Ser-252.

Belongs to the phosphatidylserine decarboxylase family. PSD-B subfamily. Prokaryotic type I sub-subfamily. In terms of assembly, heterodimer of a large membrane-associated beta subunit and a small pyruvoyl-containing alpha subunit. Pyruvate serves as cofactor. Post-translationally, is synthesized initially as an inactive proenzyme. Formation of the active enzyme involves a self-maturation process in which the active site pyruvoyl group is generated from an internal serine residue via an autocatalytic post-translational modification. Two non-identical subunits are generated from the proenzyme in this reaction, and the pyruvate is formed at the N-terminus of the alpha chain, which is derived from the carboxyl end of the proenzyme. The autoendoproteolytic cleavage occurs by a canonical serine protease mechanism, in which the side chain hydroxyl group of the serine supplies its oxygen atom to form the C-terminus of the beta chain, while the remainder of the serine residue undergoes an oxidative deamination to produce ammonia and the pyruvoyl prosthetic group on the alpha chain. During this reaction, the Ser that is part of the protease active site of the proenzyme becomes the pyruvoyl prosthetic group, which constitutes an essential element of the active site of the mature decarboxylase.

It is found in the cell membrane. It carries out the reaction a 1,2-diacyl-sn-glycero-3-phospho-L-serine + H(+) = a 1,2-diacyl-sn-glycero-3-phosphoethanolamine + CO2. It participates in phospholipid metabolism; phosphatidylethanolamine biosynthesis; phosphatidylethanolamine from CDP-diacylglycerol: step 2/2. Its function is as follows. Catalyzes the formation of phosphatidylethanolamine (PtdEtn) from phosphatidylserine (PtdSer). The polypeptide is Phosphatidylserine decarboxylase proenzyme (Pseudomonas fluorescens (strain Pf0-1)).